The following is a 230-amino-acid chain: 3,4-dihydroxy-2-butanone 4-phosphate synthase (230 aa).

D-ribulose 5-phosphate is bound by residues 38–39 (RE), Asp-43, 151–155 (RRGHT), and Glu-175. Glu-39 contacts Mg(2+). His-154 contacts Mg(2+).

This sequence belongs to the DHBP synthase family. As to quaternary structure, homodimer. It depends on Mg(2+) as a cofactor. The cofactor is Mn(2+).

The catalysed reaction is D-ribulose 5-phosphate = (2S)-2-hydroxy-3-oxobutyl phosphate + formate + H(+). It participates in cofactor biosynthesis; riboflavin biosynthesis; 2-hydroxy-3-oxobutyl phosphate from D-ribulose 5-phosphate: step 1/1. In terms of biological role, catalyzes the conversion of D-ribulose 5-phosphate to formate and 3,4-dihydroxy-2-butanone 4-phosphate. The sequence is that of 3,4-dihydroxy-2-butanone 4-phosphate synthase from Vibrio harveyi (Beneckea harveyi).